The following is a 202-amino-acid chain: Matrix protein (202 aa).

The tract at residues 9-31 is disordered; it reads KNRRDEDTQKSSPASAPLDDDDL. The PPXY motif motif lies at 35 to 38; that stretch reads PPEY. The essential for glycoprotein binding stretch occupies residues 115–151; sequence KLRRTFIFQWADSRGPLEGEELEYSQEITWDDDTEFV.

Belongs to the lyssavirus matrix protein family. In terms of assembly, homomultimer. Interacts with nucleoprotein and with the cytoplasmic domain of glycoprotein. Interacts with host ATP6V1A; this interaction plays an important role in virion uncoating after viral entry.

The protein localises to the virion membrane. Its subcellular location is the host endomembrane system. The protein resides in the host cytoplasm. Functionally, plays a major role in assembly, budding and uncoating of virion after membrane fusion. Completely covers the ribonucleoprotein coil and keep it in condensed bullet-shaped form. Inhibits viral transcription and stimulates replication. Plays a major role in early induction of TRAIL-mediated apoptosis in infected neurons. Inhibits the integrated stress response (ISR) in the infected cell by blocking the formation of stress granules. The sequence is that of Matrix protein (M) from Rabies virus (strain SAD B19) (RABV).